The chain runs to 896 residues: Translation initiation factor IF-2 (896 aa).

The segment at 32 to 306 (LAQAGSSDTK…HKTKKQSEEH (275 aa)) is disordered. Polar residues-rich tracts occupy residues 35–48 (AGSS…VSKA) and 114–126 (ADST…SSQE). The segment covering 156 to 170 (ARNEETPIIRTRTEP) has biased composition (basic and acidic residues). Positions 213–237 (QQTRPSVETASTKQQQPSGTNTRPA) are enriched in polar residues. A compositionally biased stretch (basic and acidic residues) spans 256-280 (RGPDRDRTKRSDENVKAFTGRDRYG). The tr-type G domain maps to 401 to 570 (IRSPIVAFMG…ALQAEVLELK (170 aa)). The interval 410–417 (GHVDHGKT) is G1. Residue 410 to 417 (GHVDHGKT) participates in GTP binding. Residues 435-439 (AITQH) are G2. The tract at residues 456 to 459 (DTPG) is G3. GTP-binding positions include 456-460 (DTPGH) and 510-513 (NKCD). Residues 510–513 (NKCD) form a G4 region. Positions 546–548 (SAK) are G5.

Belongs to the TRAFAC class translation factor GTPase superfamily. Classic translation factor GTPase family. IF-2 subfamily.

Its subcellular location is the cytoplasm. Its function is as follows. One of the essential components for the initiation of protein synthesis. Protects formylmethionyl-tRNA from spontaneous hydrolysis and promotes its binding to the 30S ribosomal subunits. Also involved in the hydrolysis of GTP during the formation of the 70S ribosomal complex. The sequence is that of Translation initiation factor IF-2 (infB) from Chlamydia muridarum (strain MoPn / Nigg).